The chain runs to 332 residues: 2,3-diketo-L-gulonate reductase (332 aa).

The Proton donor role is filled by His-44. NAD(+) contacts are provided by residues 168-174 (ITMVDMS), 224-225 (WK), and 304-306 (GHE).

It belongs to the LDH2/MDH2 oxidoreductase family. DlgD subfamily. Homodimer.

It localises to the cytoplasm. The catalysed reaction is 3-dehydro-L-gulonate + NAD(+) = 2,3-dioxo-L-gulonate + NADH + H(+). It catalyses the reaction 3-dehydro-L-gulonate + NADP(+) = 2,3-dioxo-L-gulonate + NADPH + H(+). Its function is as follows. Catalyzes the reduction of 2,3-diketo-L-gulonate in the presence of NADH, to form 3-keto-L-gulonate. This is 2,3-diketo-L-gulonate reductase from Escherichia coli (strain SMS-3-5 / SECEC).